Here is a 1362-residue protein sequence, read N- to C-terminus: Bromodomain-containing protein 4 (1362 aa).

Positions 1–58 (MSAESGPGTRLRNLPVMGDGLETSQMSTTQAQAQPQPANAASTNPPPPETSNPNKPKR) are disordered. A compositionally biased stretch (low complexity) spans 23–43 (TSQMSTTQAQAQPQPANAAST). The Bromo 1 domain maps to 58 to 164 (RQTNQLQYLL…KLFLQKINEL (107 aa)). Residue Lys99 forms a Glycyl lysine isopeptide (Lys-Gly) (interchain with G-Cter in SUMO2) linkage. Disordered stretches follow at residues 174 to 229 (VQAK…PAVT), 242 to 352 (VPPQ…KVSE), and 463 to 615 (EPVV…YEEK). The segment covering 197–211 (PNTTQASTPPQTQTP) has biased composition (low complexity). 2 stretches are compositionally biased toward pro residues: residues 212 to 227 (QPNPPPVQATPHPFPA) and 243 to 266 (PPQPLQTPPPVPPQPQPPPAPAPQ). Positions 320-336 (QRRESSRPVKPPKKDVP) are enriched in basic and acidic residues. Residues 348–457 (SKVSEQLKCC…DVFEMRFAKM (110 aa)) form the Bromo 2 domain. Ser470 is modified (phosphoserine). A compositionally biased stretch (low complexity) spans 478–497 (KVVAPPSSSDSSSDSSSDSD). Phosphoserine; by CK2 is present on residues Ser484, Ser488, Ser492, Ser494, Ser498, Ser499, and Ser503. The segment at 484-503 (SSSDSSSDSSSDSDSSTDDS) is NPS region. The tract at residues 524–579 (QLAALSQPQQNKPKKKEKDKKEKKKEKHKRKEEVEENKKSKAKEPPPKKTKKNNSS) is BID region. Over residues 535 to 553 (KPKKKEKDKKEKKKEKHKR) the composition is skewed to basic residues. Residues 554–570 (KEEVEENKKSKAKEPPP) are compositionally biased toward basic and acidic residues. Lys585 is covalently cross-linked (Glycyl lysine isopeptide (Lys-Gly) (interchain with G-Cter in SUMO2)). In terms of domain architecture, NET spans 600–682 (ESEEEDKCKP…SCLRKKRKPQ (83 aa)). Ser601 is modified (phosphoserine). A compositionally biased stretch (basic and acidic residues) spans 605–615 (DKCKPMSYEEK). Residues Lys645 and Lys694 each participate in a glycyl lysine isopeptide (Lys-Gly) (interchain with G-Cter in SUMO2) cross-link. Positions 674–1100 (CLRKKRKPQA…PKKQELRAAS (427 aa)) are disordered. Residues 699 to 712 (SSSESESSSESSSS) are compositionally biased toward low complexity. A compositionally biased stretch (basic residues) spans 724 to 744 (KSKKKGHPGREQKKHHHHHHQ). Composition is skewed to pro residues over residues 751 to 785 (APVPQQPPPPPQQPPPPPPPQQQQQPPPPPPPPSM), 833 to 846 (PELPPHLPQPPEHS), and 881 to 890 (PPKPARPPAV). Over residues 926–936 (MQMQLYLQQLQ) the composition is skewed to low complexity. Pro residues-rich tracts occupy residues 953 to 964 (QPPPPLPPPPHP), 973 to 996 (QPPPPPPPQPQPPPQQQHQPPPRP), and 1010 to 1034 (QPPPPQGQQPPHPPPGQQPPPPQPA). The span at 1041-1050 (QHHHSPRHHK) shows a compositional bias: basic residues. The C-terminal (CTD) region stretch occupies residues 1047–1362 (RHHKSDPYST…LLSIFEENLF (316 aa)). Lys1050 participates in a covalent cross-link: Glycyl lysine isopeptide (Lys-Gly) (interchain with G-Cter in SUMO2). Polar residues predominate over residues 1071 to 1091 (PQMSQFQSLTHQSPPQQNVQP). At Lys1111 the chain carries N6-acetyllysine; alternate. A Glycyl lysine isopeptide (Lys-Gly) (interchain with G-Cter in SUMO1); alternate cross-link involves residue Lys1111. Lys1111 is covalently cross-linked (Glycyl lysine isopeptide (Lys-Gly) (interchain with G-Cter in SUMO2); alternate). Residues 1116 to 1339 (HSPIIRSEPF…KREQERRRRE (224 aa)) form a disordered region. A phosphoserine mark is found at Ser1117 and Ser1126. Over residues 1175 to 1196 (PDKDKQKQEPKTPVAPKKDLKI) the composition is skewed to basic and acidic residues. Lys1197 participates in a covalent cross-link: Glycyl lysine isopeptide (Lys-Gly) (interchain with G-Cter in SUMO2). Residues Ser1201 and Ser1204 each carry the phosphoserine modification. The segment covering 1211–1223 (TTPSSTAKSSSDS) has biased composition (low complexity). Residues 1225–1284 (EQFRRAAREKEEREKALKAQAEHAEKEKERLRQERMRSREDEDALEQARRAHEEARRRQE) show a composition bias toward basic and acidic residues. Residues 1285 to 1313 (QQQQQRQEQQQQQQQQAAAVAAAATPQAQ) show a composition bias toward low complexity. Positions 1323–1339 (QQRELARKREQERRRRE) are enriched in basic and acidic residues.

This sequence belongs to the BET family. As to quaternary structure, interacts with p53/TP53; the interaction is direct. Interacts (via CTD region) with CDK9 and CCNT1, acting as an associated component of P-TEFb complex. Interacts with RELA (when acetylated at 'Lys-310'). Interacts (via NET domain) with NSD3, CHD4, BICRA and ATAD5. The interaction with BICRA bridges BRD4 to the GBAF complex. Interacts (via NET domain) with JMJD6 (via JmjC and N-terminal domains); the interaction is stronger in presence of ssRNA and recruits JMJD6 on distal enhancers. Interacts with NSD3. Interacts with NIPBL. In terms of assembly, interacts with SMC2. Interacts with NCAPD3. (Microbial infection) Interacts with bovine papillomavirus type 1 regulatory protein E2. This interactions may serve for the tethering of viral genomes to host mitotic chromosomes allowing successful partitioning of the viral genome during cell division. As to quaternary structure, (Microbial infection) Interacts with Epstein-Barr virus (EBV) protein EBNA1; this interaction facilitates transcriptional activation by EBNA1. In terms of assembly, (Microbial infection) Interacts with human herpes virus-8 (HHV-8) protein LANA. Phosphorylation by CK2 disrupt the intramolecular binding between the bromo domain 2 and the NPS region and promotes binding between the NPS and the BID regions, leading to activate the protein and promote binding to acetylated histones. In absence of phosphorylation, BRD4 does not localize to p53/TP53 target gene promoters, phosphorylation promoting recruitment to p53/TP53 target promoters. Ubiquitously expressed.

It localises to the nucleus. The protein localises to the chromosome. Its activity is regulated as follows. Inhibited by JQ1, a thieno-triazolo-1,4-diazepine derivative, which specifically inhibits members of the BET family (BRD2, BRD3 and BRD4). The first bromo domain is inhibited by GSK778 (iBET-BD1), which specifically inhibits the first bromo domain of members of the BET family (BRD2, BRD3 and BRD4). The second bromo domain is inhibited by ABBV-744, which specifically inhibits the second bromo domain of members of the BET family (BRD2, BRD3 and BRD4). The second bromo domain is inhibited by GSK046 (iBET-BD2), which specifically inhibits the second bromo domain of members of the BET family (BRD2, BRD3 and BRD4). In terms of biological role, chromatin reader protein that recognizes and binds acetylated histones and plays a key role in transmission of epigenetic memory across cell divisions and transcription regulation. Remains associated with acetylated chromatin throughout the entire cell cycle and provides epigenetic memory for postmitotic G1 gene transcription by preserving acetylated chromatin status and maintaining high-order chromatin structure. During interphase, plays a key role in regulating the transcription of signal-inducible genes by associating with the P-TEFb complex and recruiting it to promoters. Also recruits P-TEFb complex to distal enhancers, so called anti-pause enhancers in collaboration with JMJD6. BRD4 and JMJD6 are required to form the transcriptionally active P-TEFb complex by displacing negative regulators such as HEXIM1 and 7SKsnRNA complex from P-TEFb, thereby transforming it into an active form that can then phosphorylate the C-terminal domain (CTD) of RNA polymerase II. Regulates differentiation of naive CD4(+) T-cells into T-helper Th17 by promoting recruitment of P-TEFb to promoters. Promotes phosphorylation of 'Ser-2' of the C-terminal domain (CTD) of RNA polymerase II. According to a report, directly acts as an atypical protein kinase and mediates phosphorylation of 'Ser-2' of the C-terminal domain (CTD) of RNA polymerase II; these data however need additional evidences in vivo. In addition to acetylated histones, also recognizes and binds acetylated RELA, leading to further recruitment of the P-TEFb complex and subsequent activation of NF-kappa-B. Also acts as a regulator of p53/TP53-mediated transcription: following phosphorylation by CK2, recruited to p53/TP53 specific target promoters. Its function is as follows. Acts as a chromatin insulator in the DNA damage response pathway. Inhibits DNA damage response signaling by recruiting the condensin-2 complex to acetylated histones, leading to chromatin structure remodeling, insulating the region from DNA damage response by limiting spreading of histone H2AX/H2A.x phosphorylation. The chain is Bromodomain-containing protein 4 (BRD4) from Homo sapiens (Human).